Consider the following 187-residue polypeptide: Elongation factor P (187 aa).

This sequence belongs to the elongation factor P family.

Its subcellular location is the cytoplasm. Its pathway is protein biosynthesis; polypeptide chain elongation. Functionally, involved in peptide bond synthesis. Stimulates efficient translation and peptide-bond synthesis on native or reconstituted 70S ribosomes in vitro. Probably functions indirectly by altering the affinity of the ribosome for aminoacyl-tRNA, thus increasing their reactivity as acceptors for peptidyl transferase. This Desulfosudis oleivorans (strain DSM 6200 / JCM 39069 / Hxd3) (Desulfococcus oleovorans) protein is Elongation factor P.